Consider the following 83-residue polypeptide: Three-finger toxin W-IV (83 aa).

The first 21 residues, 1–21 (MKTLLLTLVVVTIVCLDLGHT), serve as a signal peptide directing secretion. 4 disulfides stabilise this stretch: Cys-24/Cys-45, Cys-38/Cys-62, Cys-64/Cys-75, and Cys-76/Cys-81.

This sequence belongs to the three-finger toxin family. Short-chain subfamily. Type I alpha-neurotoxin sub-subfamily. In terms of tissue distribution, expressed by the venom gland.

It is found in the secreted. Functionally, binds to muscle nicotinic acetylcholine receptor (nAChR) and inhibit acetylcholine from binding to the receptor, thereby impairing neuromuscular transmission. The protein is Three-finger toxin W-IV of Walterinnesia aegyptia (Desert black snake).